Reading from the N-terminus, the 783-residue chain is Coiled-coil domain-containing protein 30 (783 aa).

Basic and acidic residues predominate over residues M1–Q22. 3 disordered regions span residues M1–G26, L101–K191, and L209–E231. The stretch at Q22–H98 forms a coiled coil. The span at A106–N115 shows a compositional bias: polar residues. Residues I131 to K191 are compositionally biased toward basic and acidic residues. 2 coiled-coil regions span residues R165–H497 and D527–R622. Residues E731–S755 are disordered.

Belongs to the prefoldin subunit beta family. Expressed in brain, kidney, pancreas, placenta, liver, thymus and prostate.

The polypeptide is Coiled-coil domain-containing protein 30 (CCDC30) (Homo sapiens (Human)).